Reading from the N-terminus, the 214-residue chain is Adenylate kinase (214 aa).

12-17 (GVGKGT) is an ATP binding site. Residues 32 to 61 (STGNIFRSQIASNSELGIKLKEIVESGGYV) are NMP. Residues Thr-33, Arg-38, 59-61 (GYV), 88-91 (GYPR), and Gln-95 contribute to the AMP site. Positions 126–163 (GRRICPSCNAQYHIYFKKSKLDTKCEIDQSELIQRKDD) are LID. Arg-127 provides a ligand contact to ATP. Residues Cys-130, Cys-133, Cys-150, and Asp-153 each contribute to the Zn(2+) site. AMP-binding residues include Arg-160 and Arg-171. Lys-199 contacts ATP.

It belongs to the adenylate kinase family. As to quaternary structure, monomer.

The protein localises to the cytoplasm. It catalyses the reaction AMP + ATP = 2 ADP. It functions in the pathway purine metabolism; AMP biosynthesis via salvage pathway; AMP from ADP: step 1/1. Its function is as follows. Catalyzes the reversible transfer of the terminal phosphate group between ATP and AMP. Plays an important role in cellular energy homeostasis and in adenine nucleotide metabolism. The polypeptide is Adenylate kinase (Mycoplasmopsis pulmonis (strain UAB CTIP) (Mycoplasma pulmonis)).